Here is a 382-residue protein sequence, read N- to C-terminus: Cytochrome b (382 aa).

Transmembrane regions (helical) follow at residues 36–56 (FGSL…FLTM), 80–101 (WLIR…YLHI), 116–136 (WFIG…GYVL), and 181–201 (FYTF…IHLL). Residues His86 and His100 each contribute to the heme b site. Residues His185 and His199 each coordinate heme b. His204 contacts a ubiquinone. The next 4 helical transmembrane spans lie at 229–249 (YKDL…TLSN), 291–311 (LGGV…PLTF), 323–343 (INQF…WIGA), and 350–370 (YIIT…LNPL).

It belongs to the cytochrome b family. The main subunits of complex b-c1 are: cytochrome b, cytochrome c1 and the Rieske protein. Heme b serves as cofactor.

Its subcellular location is the mitochondrion inner membrane. In terms of biological role, component of the ubiquinol-cytochrome c reductase complex (complex III or cytochrome b-c1 complex) that is part of the mitochondrial respiratory chain. The b-c1 complex mediates electron transfer from ubiquinol to cytochrome c. Contributes to the generation of a proton gradient across the mitochondrial membrane that is then used for ATP synthesis. The chain is Cytochrome b (MT-CYB) from Samia ricini (Indian eri silkmoth).